A 307-amino-acid polypeptide reads, in one-letter code: Pollen allergen KBG 60 (307 aa).

The signal sequence occupies residues 1 to 22 (MAVQKYTVALFLVALVVGPAAS).

Belongs to the Poa p IX/Phl p VI allergen family. Pollen.

The polypeptide is Pollen allergen KBG 60 (Poa pratensis (Kentucky bluegrass)).